Reading from the N-terminus, the 133-residue chain is UPF0134 protein MPN_151 (133 aa).

Belongs to the UPF0134 family.

This Mycoplasma pneumoniae (strain ATCC 29342 / M129 / Subtype 1) (Mycoplasmoides pneumoniae) protein is UPF0134 protein MPN_151.